A 205-amino-acid chain; its full sequence is Holliday junction branch migration complex subunit RuvA (205 aa).

The segment at 1-64 (MIGKLKGVVD…EDMIRLYGFR (64 aa)) is domain I. The domain II stretch occupies residues 65-143 (SDAEREWFRL…AFAPVDPALV (79 aa)). Residues 144–152 (ALAGAVEEG) are flexible linker. Residues 153 to 205 (AAPQPVADAVSALVNLGYPQVQAAAAIAAALKGAGEGAEAKVLIRLGLRELAR) are domain III.

Belongs to the RuvA family. As to quaternary structure, homotetramer. Forms an RuvA(8)-RuvB(12)-Holliday junction (HJ) complex. HJ DNA is sandwiched between 2 RuvA tetramers; dsDNA enters through RuvA and exits via RuvB. An RuvB hexamer assembles on each DNA strand where it exits the tetramer. Each RuvB hexamer is contacted by two RuvA subunits (via domain III) on 2 adjacent RuvB subunits; this complex drives branch migration. In the full resolvosome a probable DNA-RuvA(4)-RuvB(12)-RuvC(2) complex forms which resolves the HJ.

Its subcellular location is the cytoplasm. In terms of biological role, the RuvA-RuvB-RuvC complex processes Holliday junction (HJ) DNA during genetic recombination and DNA repair, while the RuvA-RuvB complex plays an important role in the rescue of blocked DNA replication forks via replication fork reversal (RFR). RuvA specifically binds to HJ cruciform DNA, conferring on it an open structure. The RuvB hexamer acts as an ATP-dependent pump, pulling dsDNA into and through the RuvAB complex. HJ branch migration allows RuvC to scan DNA until it finds its consensus sequence, where it cleaves and resolves the cruciform DNA. The sequence is that of Holliday junction branch migration complex subunit RuvA from Methylobacterium radiotolerans (strain ATCC 27329 / DSM 1819 / JCM 2831 / NBRC 15690 / NCIMB 10815 / 0-1).